Here is a 163-residue protein sequence, read N- to C-terminus: Staphylokinase (163 aa).

Residues 1-27 (MLKRSLLFLTVLLLLFSFSSITNEVSA) form the signal peptide.

This sequence belongs to the staphylokinase family.

It localises to the secreted. Its function is as follows. Potent plasminogen activator that converts plasminogen into plasmin. It forms a 1:1 complex with plasmin, which in turn activates other plasminogen molecules. This Staphylococcus phage phi13 (Bacteriophage phi-13) protein is Staphylokinase (sak).